A 204-amino-acid polypeptide reads, in one-letter code: Peptide deformylase (204 aa).

Residues C131 and H174 each coordinate Fe cation. The active site involves E175. H178 contributes to the Fe cation binding site.

Belongs to the polypeptide deformylase family. Requires Fe(2+) as cofactor.

It carries out the reaction N-terminal N-formyl-L-methionyl-[peptide] + H2O = N-terminal L-methionyl-[peptide] + formate. In terms of biological role, removes the formyl group from the N-terminal Met of newly synthesized proteins. Requires at least a dipeptide for an efficient rate of reaction. N-terminal L-methionine is a prerequisite for activity but the enzyme has broad specificity at other positions. The chain is Peptide deformylase from Streptococcus mutans serotype c (strain ATCC 700610 / UA159).